The chain runs to 233 residues: Uridylate kinase (233 aa).

G9 to S10 is an ATP binding site. UMP is bound at residue G43. ATP-binding residues include G44 and R48. UMP contacts are provided by residues D65 and V113 to T119. The ATP site is built by T139, Y145, and D148.

This sequence belongs to the UMP kinase family. In terms of assembly, homohexamer.

Its subcellular location is the cytoplasm. The enzyme catalyses UMP + ATP = UDP + ADP. The protein operates within pyrimidine metabolism; CTP biosynthesis via de novo pathway; UDP from UMP (UMPK route): step 1/1. Inhibited by UTP. Functionally, catalyzes the reversible phosphorylation of UMP to UDP. The polypeptide is Uridylate kinase (Methanosarcina barkeri (strain Fusaro / DSM 804)).